Consider the following 473-residue polypeptide: C3a anaphylatoxin chemotactic receptor (473 aa).

Topologically, residues 1–23 are extracellular; the sequence is MESFTADTNSTDLHSRPLFKPQD. A glycan (N-linked (GlcNAc...) asparagine) is linked at Asn-9. A helical membrane pass occupies residues 24–46; sequence IASMVILSLTCLLGLPGNGLVLW. At 47 to 57 the chain is on the cytoplasmic side; sequence VAGVKMKRTVN. Residues 58 to 80 form a helical membrane-spanning segment; sequence TVWFLHLTLADFLCCLSLPFSVA. Topologically, residues 81–96 are extracellular; the sequence is HLILRGHWPYGLFLCK. Cys-95 and Cys-172 are joined by a disulfide. The helical transmembrane segment at 97–118 threads the bilayer; sequence LIPSVIILNMFASVFLLTAISL. At 119-139 the chain is on the cytoplasmic side; the sequence is DRCLMVHKPIWCQNHRSVRTA. A helical transmembrane segment spans residues 140 to 160; the sequence is FAVCGCVWVVTFVMCIPVFVY. At 161 to 329 the chain is on the extracellular side; sequence RDLLVVDDYS…TPQVAITISR (169 aa). Residues Tyr-174 and Tyr-184 each carry the sulfotyrosine modification. N-linked (GlcNAc...) asparagine glycosylation is present at Asn-201. Positions 233-252 are disordered; the sequence is FHTSPEDPFSQDSASQQPHY. Tyr-308 is modified (sulfotyrosine). The chain crosses the membrane as a helical span at residues 330 to 349; that stretch reads LVVGFLVPFFIMITCYSLIV. The Cytoplasmic portion of the chain corresponds to 350 to 366; sequence FRMRKTNLTKSRNKTLR. A helical transmembrane segment spans residues 367 to 389; that stretch reads VAVAVVTVFFVCWIPYHIVGILL. The Extracellular portion of the chain corresponds to 390 to 406; it reads VITDQESALREVVLPWD. A helical membrane pass occupies residues 407–427; that stretch reads HMSIALASANSCFNPFLYALL. Residues 428–473 are Cytoplasmic-facing; sequence GKDFRKKARQSVKGILEAAFSEELTHSTSCTQDKAPSKRNHMSTDV. Position 448 is a phosphoserine (Ser-448). A Phosphothreonine modification is found at Thr-452.

Belongs to the G-protein coupled receptor 1 family. In terms of assembly, interacts with VGF-derived peptide TLQP-21.

It is found in the cell membrane. Receptor for the chemotactic and inflammatory peptide anaphylatoxin C3a. This receptor stimulates chemotaxis, granule enzyme release and superoxide anion production. The protein is C3a anaphylatoxin chemotactic receptor (C3ar1) of Rattus norvegicus (Rat).